The chain runs to 867 residues: Probable potassium transporter 15 (867 aa).

Residues 1 to 13 are compositionally biased toward low complexity; it reads MAASSSSSASASA. Positions 1-88 are disordered; the sequence is MAASSSSSAS…EGEGEDGEKQ (88 aa). Residues 1-124 are Cytoplasmic-facing; it reads MAASSSSSAS…DSEEFDFGRT (124 aa). Residues 32–44 show a composition bias toward acidic residues; it reads TEEDDEGEEDGDT. Residues 45-54 are compositionally biased toward low complexity; that stretch reads VEAAAAAVGA. Residues 63–84 are compositionally biased toward acidic residues; the sequence is SEEEEDEEDGGGGGEGEGEGED. The helical transmembrane segment at 125 to 145 threads the bilayer; it reads MFLALQTLAVVFGDIGISPLY. The Extracellular portion of the chain corresponds to 146 to 167; it reads TFDVMFSKYPILGEEDVLGALS. The chain crosses the membrane as a helical span at residues 168–188; the sequence is LVLYTLISMPLVKYVLVVLWA. Residues 189–252 are Cytoplasmic-facing; it reads NDDGEGGIFA…KLESSLLLKK (64 aa). Residues 253–273 traverse the membrane as a helical segment; that stretch reads LLLGLVLFGTAMFISNGVITP. The Extracellular segment spans residues 274–285; sequence AMSVLSAVSGLK. The helical transmembrane segment at 286–306 threads the bilayer; sequence VGIPNASQGLVVMISVVLLVI. Over 307-317 the chain is Cytoplasmic; it reads LYSVQRYATSK. Residues 318-338 form a helical membrane-spanning segment; that stretch reads MGFALGPSLLIWFCCLGGIGI. Over 339-365 the chain is Extracellular; it reads YNLSTYGPAAFKAFNPLYIIYYFGRNP. An N-linked (GlcNAc...) asparagine glycan is attached at Asn-340. A helical membrane pass occupies residues 366–386; that stretch reads FQAWLSLAGCLLCATGSEAIF. The Cytoplasmic portion of the chain corresponds to 387–400; that stretch reads ANLSYFPVRYVQSM. A helical membrane pass occupies residues 401–421; it reads FALLVLPCLVLAYLGQGAFLI. Over 422 to 433 the chain is Extracellular; the sequence is ANQNSSEQIFFS. Asn-425 carries an N-linked (GlcNAc...) asparagine glycan. A helical membrane pass occupies residues 434 to 454; the sequence is SIPSGVFWPVFLIANLAALIA. Residues 455–490 lie on the Cytoplasmic side of the membrane; it reads SRTMTTAIFQCLKQSIALGCFPRLKIIHTSRKFMAK. A helical membrane pass occupies residues 491 to 511; the sequence is IYIPVVNWFLLFSCLGFILLF. Over 512 to 522 the chain is Extracellular; the sequence is RSIYDVGNAYA. A helical transmembrane segment spans residues 523–543; it reads IAELGVMIMATVYVTIIMLLI. Residues 544–545 lie on the Cytoplasmic side of the membrane; that stretch reads WE. Residues 546 to 566 form a helical membrane-spanning segment; that stretch reads TSIVKVLSFVITFLSLELVFF. Over 567–572 the chain is Extracellular; that stretch reads SSSLSS. Residues 573–593 traverse the membrane as a helical segment; the sequence is VGDGGWALIIFASGILMVMFI. Topologically, residues 594-867 are cytoplasmic; the sequence is WNYGSKLKYD…VMQVRLTSYV (274 aa).

The protein belongs to the HAK/KUP transporter (TC 2.A.72.3) family.

It localises to the membrane. Its function is as follows. High-affinity potassium transporter. The sequence is that of Probable potassium transporter 15 (HAK15) from Oryza sativa subsp. japonica (Rice).